The following is a 70-amino-acid chain: Alpha-toxin Bot9 (70 aa).

Residues 6-69 (RDGYIVYPNN…PIKDPSYKCY (64 aa)) form the LCN-type CS-alpha/beta domain. Cystine bridges form between cysteine 16/cysteine 68, cysteine 20/cysteine 40, cysteine 26/cysteine 50, and cysteine 30/cysteine 52.

Belongs to the long (4 C-C) scorpion toxin superfamily. Sodium channel inhibitor family. Alpha subfamily. As to expression, expressed by the venom gland.

The protein resides in the secreted. Its function is as follows. Alpha toxins bind voltage-independently at site-3 of sodium channels (Nav) and inhibit the inactivation of the activated channels, thereby blocking neuronal transmission. This toxin is active against rat Nav1.2/SCN2A and B.germanica Nav1. In Buthus occitanus tunetanus (Common European scorpion), this protein is Alpha-toxin Bot9.